A 423-amino-acid chain; its full sequence is Keratin, type I cytoskeletal 18 (423 aa).

S2 carries the N-acetylserine modification. Residues 2–71 (SFTTRSTTFS…GLAGMGGVQT (70 aa)) form a head region. Phosphoserine occurs at positions 7, 11, 16, and 19. Phosphoserine; alternate occurs at positions 31 and 32. O-linked (GlcNAc) serine; alternate glycosylation is found at S31 and S32. S35 bears the Phosphoserine mark. Residue Y37 is modified to Phosphotyrosine. S43 is subject to Phosphoserine. An Omega-N-methylarginine modification is found at R46. S50 is subject to Phosphoserine; alternate. The O-linked (GlcNAc) serine; alternate glycan is linked to S50. At S52 the chain carries Phosphoserine; by MAPKAPK2 and MAPKAPK3. Phosphoserine occurs at positions 57 and 60. The segment at 62–366 (GLAGMGGVQT…EALLNIKVKL (305 aa)) is necessary for interaction with PNN. Positions 69-121 (VQTEKETMQDLNDRLASYLDKVKNLETENRRLESKIREYLEKRGPQGVRDWGH) are interaction with TRADD. Residues 72-107 (EKETMQDLNDRLASYLDKVKNLETENRRLESKIREY) are coil 1A. An IF rod domain is found at 72 to 384 (EKETMQDLND…RLLEDGDDFS (313 aa)). K73 is covalently cross-linked (Glycyl lysine isopeptide (Lys-Gly) (interchain with G-Cter in SUMO2)). S85 is modified (phosphoserine). The interval 108–125 (LEKRGPQGVRDWGHYFKT) is linker 1. K124 carries the N6-acetyllysine modification. Positions 126–217 (IEDLRAQIFA…KNHEEEVQGL (92 aa)) are coil 1B. S137 and S170 each carry phosphoserine. Residues 218–241 (EAQIASSGLTVEVDAPKSQDLSKI) form a linker 12 region. An interaction with DNAJB6 region spans residues 236 to 384 (QDLSKIMADI…RLLEDGDDFS (149 aa)). K240 is covalently cross-linked (Glycyl lysine isopeptide (Lys-Gly) (interchain with G-Cter in SUMO2)). Positions 242-380 (MADIRAQYEQ…ATYRRLLEDG (139 aa)) are coil 2. Phosphothreonine is present on T295. Residues K363 and K365 each participate in a glycyl lysine isopeptide (Lys-Gly) (interchain with G-Cter in SUMO2) cross-link. Residues 381–423 (DDFSLNDALDSSNSMQTVQRTTTRKVVDGKVVSETNDTRVLRH) are tail. Residues S384, S391, S392, and S394 each carry the phosphoserine modification. A Phosphothreonine modification is found at T397. A Glycyl lysine isopeptide (Lys-Gly) (interchain with G-Cter in SUMO2) cross-link involves residue K410.

Belongs to the intermediate filament family. As to quaternary structure, heterotetramer of two type I and two type II keratins. KRT18 associates with KRT8. Interacts with PNN and mutated CFTR. Interacts with YWHAE, YWHAH and YWHAZ only when phosphorylated. Interacts with DNAJB6, TCHP and TRADD. Interacts with the thrombin-antithrombin complex. Interacts with FAM83H. Interacts with EPPK1. Interacts with PKP1 and PKP2. Post-translationally, phosphorylation increases by IL-6. Proteolytically cleaved by caspases during epithelial cell apoptosis. Cleavage occurs at Asp-231 by either caspase-3, caspase-6 or caspase-7. In terms of processing, dephosphorylated by ethanol. Post-translationally, O-GlcNAcylation increases solubility, and decreases stability by inducing proteasomal degradation. Expressed on the plasma membrane of hepatocytes and in the narrow apical portions of supporting cells in the vomeronasal sensory epithelium. Detected in the type III alveolar cells of the lung, in the proliferative crypt epithelium of the small intestine and in the older intragemmal cells of the tongue.

It localises to the nucleus matrix. The protein localises to the cytoplasm. Its subcellular location is the perinuclear region. It is found in the nucleus. The protein resides in the nucleolus. Its function is as follows. When phosphorylated, plays a role in filament reorganization. Involved in the delivery of mutated CFTR to the plasma membrane. Together with KRT8, is involved in interleukin-6 (IL-6)-mediated barrier protection. Involved in the uptake of thrombin-antithrombin complexes by hepatic cells. The polypeptide is Keratin, type I cytoskeletal 18 (Rattus norvegicus (Rat)).